The sequence spans 2028 residues: Pecanex-like protein 3 (2028 aa).

2 helical membrane-spanning segments follow: residues 33–53 and 54–74; these read CFHL…YMVL and PPSL…FATI. The N-linked (GlcNAc...) asparagine glycan is linked to asparagine 95. Residues 96 to 116 form a disordered region; sequence STMGEQEEEAAQGESSLPRDP. Serine 127 carries the phosphoserine modification. Threonine 129 bears the Phosphothreonine mark. Disordered regions lie at residues 193–239 and 263–625; these read IGDL…PMSP and LVRT…SHSR. The span at 198–208 shows a compositional bias: pro residues; sequence QTPPGVVPDPS. Composition is skewed to basic and acidic residues over residues 263-273 and 305-319; these read LVRTSSRREQC and TDRE…EKTN. A glycan (N-linked (GlcNAc...) asparagine) is linked at asparagine 319. A Phosphothreonine modification is found at threonine 370. Phosphoserine is present on residues serine 392 and serine 431. The span at 427–437 shows a compositional bias: polar residues; it reads GSELSPASSLR. The segment covering 444–459 has biased composition (low complexity); sequence TDSSSSTSCYSPESSQ. The span at 488–497 shows a compositional bias: polar residues; sequence TQRTPSTASA. Phosphoserine is present on residues serine 505 and serine 521. A run of 7 helical transmembrane segments spans residues 793 to 815, 819 to 836, 852 to 872, 880 to 900, 903 to 923, 946 to 968, and 980 to 1000; these read NIFG…LKGF, IWVF…YSLL, WVIA…IWLL, PFPP…FFCA, VATV…LPQV, SPLT…YGFC, and HVPV…YHLS. Position 1025 is a phosphoserine (serine 1025). The next 4 helical transmembrane spans lie at 1053-1073, 1078-1098, 1244-1264, and 1280-1300; these read LVMC…TVFI, VLGF…HYLL, FVLT…HAFA, and LLSG…VFIM. Position 1697 is a phosphoserine (serine 1697). The N-linked (GlcNAc...) asparagine glycan is linked to asparagine 1770. The tract at residues 1845–2028 is disordered; it reads GLTSLSNHPP…AAQPLLEHQY (184 aa). Positions 1890–1921 are enriched in pro residues; sequence RPPPLLQWPPPRLPGPPPASPAPTEGPRPSRP. Serine 1909 and serine 1955 each carry phosphoserine. Low complexity predominate over residues 1966–1977; the sequence is PLDLSLSPDVSS. A compositionally biased stretch (polar residues) spans 1978–1987; that stretch reads EASPARTTQD.

It belongs to the pecanex family.

The protein localises to the membrane. This is Pecanex-like protein 3 from Mus musculus (Mouse).